Reading from the N-terminus, the 362-residue chain is 3-dehydroquinate synthase (362 aa).

Belongs to the archaeal-type DHQ synthase family.

The enzyme catalyses 2-amino-2,3,7-trideoxy-D-lyxo-hept-6-ulosonate + NAD(+) + H2O = 3-dehydroquinate + NH4(+) + NADH + H(+). Catalyzes the oxidative deamination and cyclization of 2-amino-3,7-dideoxy-D-threo-hept-6-ulosonic acid (ADH) to yield 3-dehydroquinate (DHQ), which is fed into the canonical shikimic pathway of aromatic amino acid biosynthesis. This is 3-dehydroquinate synthase from Methanothrix thermoacetophila (strain DSM 6194 / JCM 14653 / NBRC 101360 / PT) (Methanosaeta thermophila).